We begin with the raw amino-acid sequence, 297 residues long: Small ribosomal subunit biogenesis GTPase RsgA (297 aa).

Positions 65–223 (RNELVRPPVA…VADTPGFSAI (159 aa)) constitute a CP-type G domain. Residues 114-117 (TKVD) and 166-174 (GQSGAGKST) contribute to the GTP site. Residues Cys247, Cys252, His254, and Cys260 each contribute to the Zn(2+) site.

This sequence belongs to the TRAFAC class YlqF/YawG GTPase family. RsgA subfamily. In terms of assembly, monomer. Associates with 30S ribosomal subunit, binds 16S rRNA. Requires Zn(2+) as cofactor.

The protein resides in the cytoplasm. One of several proteins that assist in the late maturation steps of the functional core of the 30S ribosomal subunit. Helps release RbfA from mature subunits. May play a role in the assembly of ribosomal proteins into the subunit. Circularly permuted GTPase that catalyzes slow GTP hydrolysis, GTPase activity is stimulated by the 30S ribosomal subunit. The sequence is that of Small ribosomal subunit biogenesis GTPase RsgA from Enterococcus faecalis (strain ATCC 700802 / V583).